The primary structure comprises 348 residues: Protein RecA (348 aa).

An ATP-binding site is contributed by 67-74 (GPESSGKT).

The protein belongs to the RecA family.

The protein resides in the cytoplasm. Can catalyze the hydrolysis of ATP in the presence of single-stranded DNA, the ATP-dependent uptake of single-stranded DNA by duplex DNA, and the ATP-dependent hybridization of homologous single-stranded DNAs. It interacts with LexA causing its activation and leading to its autocatalytic cleavage. The protein is Protein RecA of Amycolatopsis mediterranei (strain U-32).